We begin with the raw amino-acid sequence, 369 residues long: RNA pseudouridine synthase 5 (369 aa).

The region spanning 47–104 is the S4 RNA-binding domain; it reads APLLGWIQRIQNGQIQIDGEVVKDPNTLLRSGSKLVYSRLPWKEPDTPYSLEVLYEDD.

It belongs to the pseudouridine synthase RluA family.

The catalysed reaction is a uridine in RNA = a pseudouridine in RNA. The sequence is that of RNA pseudouridine synthase 5 from Arabidopsis thaliana (Mouse-ear cress).